We begin with the raw amino-acid sequence, 570 residues long: Urease subunit alpha (570 aa).

The 440-residue stretch at 131-570 (GGMDSHIHFI…LPMAQRYFLF (440 aa)) folds into the Urease domain. Residues histidine 136, histidine 138, and lysine 219 each contribute to the Ni(2+) site. Lysine 219 is modified (N6-carboxylysine). Histidine 221 lines the substrate pocket. The Ni(2+) site is built by histidine 248 and histidine 274. Histidine 322 serves as the catalytic Proton donor. Aspartate 362 is a Ni(2+) binding site.

The protein belongs to the metallo-dependent hydrolases superfamily. Urease alpha subunit family. As to quaternary structure, heterotrimer of UreA (gamma), UreB (beta) and UreC (alpha) subunits. Three heterotrimers associate to form the active enzyme. The cofactor is Ni cation. Carboxylation allows a single lysine to coordinate two nickel ions.

Its subcellular location is the cytoplasm. The catalysed reaction is urea + 2 H2O + H(+) = hydrogencarbonate + 2 NH4(+). Its pathway is nitrogen metabolism; urea degradation; CO(2) and NH(3) from urea (urease route): step 1/1. The polypeptide is Urease subunit alpha (Sinorhizobium fredii (strain NBRC 101917 / NGR234)).